The sequence spans 114 residues: MEQVSATARYLRIGPQKVRMLVDGIKGKSVEKGLNTLRFMPNKGAGLVEKALRSAVANAEEKNMDVDGLVILNVLVDQGPTLKRFRPRARGRATRILKRTSHITVVLAEKAAKN.

This sequence belongs to the universal ribosomal protein uL22 family. As to quaternary structure, part of the 50S ribosomal subunit.

In terms of biological role, this protein binds specifically to 23S rRNA; its binding is stimulated by other ribosomal proteins, e.g. L4, L17, and L20. It is important during the early stages of 50S assembly. It makes multiple contacts with different domains of the 23S rRNA in the assembled 50S subunit and ribosome. Functionally, the globular domain of the protein is located near the polypeptide exit tunnel on the outside of the subunit, while an extended beta-hairpin is found that lines the wall of the exit tunnel in the center of the 70S ribosome. This is Large ribosomal subunit protein uL22 from Desulfosudis oleivorans (strain DSM 6200 / JCM 39069 / Hxd3) (Desulfococcus oleovorans).